A 1206-amino-acid polypeptide reads, in one-letter code: Phosphoglucan, water dikinase, chloroplastic (1206 aa).

Disordered regions lie at residues 1–20 (MTSLRPLETSLSIGGRPRRG) and 52–71 (RSAASAAERTKEKKRRDSSK). Residues 1–56 (MTSLRPLETSLSIGGRPRRGLVLPPPGVGAGVLLRRGAMALPGRRGFACRGRSAAS) constitute a chloroplast transit peptide. The CBM20 domain occupies 67-168 (RDSSKQPLVH…KFDIVCHWNR (102 aa)). Residue His-776 is the Tele-phosphohistidine intermediate of the active site.

Belongs to the PEP-utilizing enzyme family. As to quaternary structure, homodimer. It depends on Mg(2+) as a cofactor.

The protein localises to the plastid. The protein resides in the chloroplast. It catalyses the reaction [(1-&gt;4)-6-phospho-alpha-D-glucosyl](n) + n ATP + n H2O = [(1-&gt;4)-3,6-bisphospho-alpha-D-glucosyl](n) + n AMP + n phosphate + 2n H(+). Functionally, mediates the incorporation of phosphate into starch-like phospho-alpha-glucan, mostly at the C-3 position of glucose units. May be required for starch degradation, suggesting that the phosphate content of starch regulates its degradability. This Oryza sativa subsp. japonica (Rice) protein is Phosphoglucan, water dikinase, chloroplastic (GWD3).